A 45-amino-acid polypeptide reads, in one-letter code: Photosystem II reaction center protein K (45 aa).

A propeptide spanning residues 1–8 (MDVNFLLS) is cleaved from the precursor. Residues 20–40 (IVDVMPAIPVFFLLLAFVWQA) traverse the membrane as a helical segment.

It belongs to the PsbK family. As to quaternary structure, PSII is composed of 1 copy each of membrane proteins PsbA, PsbB, PsbC, PsbD, PsbE, PsbF, PsbH, PsbI, PsbJ, PsbK, PsbL, PsbM, PsbT, PsbX, PsbY, PsbZ, Psb30/Ycf12, at least 3 peripheral proteins of the oxygen-evolving complex and a large number of cofactors. It forms dimeric complexes.

The protein resides in the plastid. It is found in the chloroplast thylakoid membrane. Its function is as follows. One of the components of the core complex of photosystem II (PSII). PSII is a light-driven water:plastoquinone oxidoreductase that uses light energy to abstract electrons from H(2)O, generating O(2) and a proton gradient subsequently used for ATP formation. It consists of a core antenna complex that captures photons, and an electron transfer chain that converts photonic excitation into a charge separation. The sequence is that of Photosystem II reaction center protein K from Emiliania huxleyi (Coccolithophore).